The chain runs to 306 residues: Mitochondrial basic amino acids transporter (306 aa).

6 helical membrane-spanning segments follow: residues 2 to 22 (ALDF…GHPF), 61 to 81 (GLGS…GVQG), 96 to 116 (FLAG…MELA), 153 to 172 (GMVS…FLTY), 187 to 207 (LLVP…WLST), and 255 to 275 (LLRA…VLTY). Solcar repeat units follow at residues 2-86 (ALDF…TLRA), 90-178 (DSPL…LTRA), and 190-275 (PKLL…VLTY). The tract at residues 283–306 (VDSEAAPGASTTPAGPALAQPSSL) is disordered. The span at 287-306 (AAPGASTTPAGPALAQPSSL) shows a compositional bias: low complexity.

Belongs to the mitochondrial carrier (TC 2.A.29) family.

The protein resides in the mitochondrion inner membrane. It carries out the reaction L-lysine(out) + L-arginine(in) = L-lysine(in) + L-arginine(out). The enzyme catalyses L-histidine(out) + L-arginine(in) = L-histidine(in) + L-arginine(out). It catalyses the reaction L-ornithine(in) + L-arginine(out) = L-ornithine(out) + L-arginine(in). The catalysed reaction is L-homoarginine(in) + L-arginine(out) = L-homoarginine(out) + L-arginine(in). It carries out the reaction N(omega)-methyl-L-arginine(in) + L-arginine(out) = N(omega)-methyl-L-arginine(out) + L-arginine(in). The enzyme catalyses L-arginine(in) = L-arginine(out). It catalyses the reaction L-lysine(in) = L-lysine(out). The catalysed reaction is L-ornithine(in) = L-ornithine(out). It carries out the reaction L-histidine(out) = L-histidine(in). Its function is as follows. Mitochondrial transporter of arginine, lysine, homoarginine, methylarginine and, to a much lesser extent, ornithine and histidine. Does not transport carnitine nor acylcarnitines. Functions by both counter-exchange and uniport mechanisms. Plays a physiological role in the import of basic amino acids into mitochondria for mitochondrial protein synthesis and amino acid degradation. This chain is Mitochondrial basic amino acids transporter (Slc25a29), found in Rattus norvegicus (Rat).